The following is a 258-amino-acid chain: MNAISLAVDQFVAVLTIHNPPANALSSRILEELSSCLDQCETDAGVRSIIIHGEGRFFSAGADIKEFTSLKGNEDSSLLAERGQQLMERIESFPKPIIAAIHGAALGGGLELAMACHIRIAAEDAKLGLPELNLGIIPGFAGTQRLPRYVGTAKALELIGSGEPISGKEALDLGLVSIGAKDEAEVIEKAKALAAKFAEKSPQTLASLLELLYSNKVYSYEGSLKLEAKRFGEAFESEDAKEGIQAFLEKRKPQFKGE.

This sequence belongs to the enoyl-CoA hydratase/isomerase family.

The enzyme catalyses a (3S)-3-hydroxyacyl-CoA = a (2E)-enoyl-CoA + H2O. It carries out the reaction a 4-saturated-(3S)-3-hydroxyacyl-CoA = a (3E)-enoyl-CoA + H2O. Its pathway is lipid metabolism; fatty acid beta-oxidation. In terms of biological role, involved in the degradation of long-chain fatty acids. The polypeptide is Probable enoyl-CoA hydratase (fadB) (Bacillus subtilis (strain 168)).